Here is a 373-residue protein sequence, read N- to C-terminus: Peptide chain release factor 2 (373 aa).

Gln251 bears the N5-methylglutamine mark.

The protein belongs to the prokaryotic/mitochondrial release factor family. Post-translationally, methylated by PrmC. Methylation increases the termination efficiency of RF2.

Its subcellular location is the cytoplasm. In terms of biological role, peptide chain release factor 2 directs the termination of translation in response to the peptide chain termination codons UGA and UAA. In Salinispora tropica (strain ATCC BAA-916 / DSM 44818 / JCM 13857 / NBRC 105044 / CNB-440), this protein is Peptide chain release factor 2.